The chain runs to 127 residues: Holo-[acyl-carrier-protein] synthase (127 aa).

Residues aspartate 9 and glutamate 58 each coordinate Mg(2+).

The protein belongs to the P-Pant transferase superfamily. AcpS family. Mg(2+) is required as a cofactor.

Its subcellular location is the cytoplasm. It carries out the reaction apo-[ACP] + CoA = holo-[ACP] + adenosine 3',5'-bisphosphate + H(+). Its function is as follows. Transfers the 4'-phosphopantetheine moiety from coenzyme A to a Ser of acyl-carrier-protein. This Shewanella sp. (strain MR-4) protein is Holo-[acyl-carrier-protein] synthase.